Here is a 336-residue protein sequence, read N- to C-terminus: Phospho-N-acetylmuramoyl-pentapeptide-transferase (336 aa).

Transmembrane regions (helical) follow at residues Leu3–Ile23, Gly53–Ile73, Ser78–Leu98, Leu118–Ile138, Val143–Val163, Gly174–Ala194, Phe200–Asn220, Val226–Ala246, Trp251–Val271, and Ala316–Phe336.

Belongs to the glycosyltransferase 4 family. MraY subfamily. It depends on Mg(2+) as a cofactor.

It is found in the cell membrane. The enzyme catalyses UDP-N-acetyl-alpha-D-muramoyl-L-alanyl-gamma-D-glutamyl-L-lysyl-D-alanyl-D-alanine + di-trans,octa-cis-undecaprenyl phosphate = Mur2Ac(oyl-L-Ala-gamma-D-Glu-L-Lys-D-Ala-D-Ala)-di-trans,octa-cis-undecaprenyl diphosphate + UMP. Its pathway is cell wall biogenesis; peptidoglycan biosynthesis. Its function is as follows. Catalyzes the initial step of the lipid cycle reactions in the biosynthesis of the cell wall peptidoglycan: transfers peptidoglycan precursor phospho-MurNAc-pentapeptide from UDP-MurNAc-pentapeptide onto the lipid carrier undecaprenyl phosphate, yielding undecaprenyl-pyrophosphoryl-MurNAc-pentapeptide, known as lipid I. This Streptococcus pyogenes serotype M4 (strain MGAS10750) protein is Phospho-N-acetylmuramoyl-pentapeptide-transferase.